Consider the following 436-residue polypeptide: UPF0761 membrane protein Bxeno_A3061 (436 aa).

6 helical membrane passes run 42–62, 96–116, 136–156, 180–200, 210–230, and 241–261; these read LVPL…FASF, GLTT…MMTV, ILVY…SLSI, ALAG…YVYL, AVIG…GFGY, and VYGA…CWFI.

Belongs to the UPF0761 family.

It is found in the cell inner membrane. This Paraburkholderia xenovorans (strain LB400) protein is UPF0761 membrane protein Bxeno_A3061.